The chain runs to 329 residues: Beta-ketoacyl-[acyl-carrier-protein] synthase III (329 aa).

Residues C114 and H255 contribute to the active site. Residues 256 to 260 (QANQR) form an ACP-binding region. N285 is an active-site residue.

Belongs to the thiolase-like superfamily. FabH family. As to quaternary structure, homodimer.

The protein localises to the cytoplasm. It catalyses the reaction malonyl-[ACP] + acetyl-CoA + H(+) = 3-oxobutanoyl-[ACP] + CO2 + CoA. The protein operates within lipid metabolism; fatty acid biosynthesis. Its function is as follows. Catalyzes the condensation reaction of fatty acid synthesis by the addition to an acyl acceptor of two carbons from malonyl-ACP. Catalyzes the first condensation reaction which initiates fatty acid synthesis and may therefore play a role in governing the total rate of fatty acid production. Possesses both acetoacetyl-ACP synthase and acetyl transacylase activities. Its substrate specificity determines the biosynthesis of branched-chain and/or straight-chain of fatty acids. This chain is Beta-ketoacyl-[acyl-carrier-protein] synthase III, found in Thermosynechococcus vestitus (strain NIES-2133 / IAM M-273 / BP-1).